Consider the following 346-residue polypeptide: N-acetyl-gamma-glutamyl-phosphate reductase (346 aa).

Cys150 is a catalytic residue.

It belongs to the NAGSA dehydrogenase family. Type 1 subfamily.

The protein localises to the cytoplasm. The catalysed reaction is N-acetyl-L-glutamate 5-semialdehyde + phosphate + NADP(+) = N-acetyl-L-glutamyl 5-phosphate + NADPH + H(+). It participates in amino-acid biosynthesis; L-arginine biosynthesis; N(2)-acetyl-L-ornithine from L-glutamate: step 3/4. Functionally, catalyzes the NADPH-dependent reduction of N-acetyl-5-glutamyl phosphate to yield N-acetyl-L-glutamate 5-semialdehyde. The sequence is that of N-acetyl-gamma-glutamyl-phosphate reductase from Acetivibrio thermocellus (strain ATCC 27405 / DSM 1237 / JCM 9322 / NBRC 103400 / NCIMB 10682 / NRRL B-4536 / VPI 7372) (Clostridium thermocellum).